A 95-amino-acid chain; its full sequence is Aspartyl/glutamyl-tRNA(Asn/Gln) amidotransferase subunit C (95 aa).

Belongs to the GatC family. Heterotrimer of A, B and C subunits.

The enzyme catalyses L-glutamyl-tRNA(Gln) + L-glutamine + ATP + H2O = L-glutaminyl-tRNA(Gln) + L-glutamate + ADP + phosphate + H(+). The catalysed reaction is L-aspartyl-tRNA(Asn) + L-glutamine + ATP + H2O = L-asparaginyl-tRNA(Asn) + L-glutamate + ADP + phosphate + 2 H(+). Functionally, allows the formation of correctly charged Asn-tRNA(Asn) or Gln-tRNA(Gln) through the transamidation of misacylated Asp-tRNA(Asn) or Glu-tRNA(Gln) in organisms which lack either or both of asparaginyl-tRNA or glutaminyl-tRNA synthetases. The reaction takes place in the presence of glutamine and ATP through an activated phospho-Asp-tRNA(Asn) or phospho-Glu-tRNA(Gln). This Geobacter metallireducens (strain ATCC 53774 / DSM 7210 / GS-15) protein is Aspartyl/glutamyl-tRNA(Asn/Gln) amidotransferase subunit C.